A 521-amino-acid polypeptide reads, in one-letter code: uncharacterized protein (521 aa).

Positions 1–22 (MGFKLKGFGFLTLFASQAFLTA) are cleaved as a signal peptide. A lipid anchor (N-palmitoyl cysteine) is attached at cysteine 23. Cysteine 23 is lipidated: S-diacylglycerol cysteine.

It belongs to the MG067/MG068/MG395 family.

The protein resides in the cell membrane. This is an uncharacterized protein from Mycoplasma pneumoniae (strain ATCC 29342 / M129 / Subtype 1) (Mycoplasmoides pneumoniae).